The primary structure comprises 283 residues: Protein/nucleic acid deglycase HchA (283 aa).

3 residues coordinate Zn(2+): H86, E91, and H123. The active-site Nucleophile is C185.

Belongs to the peptidase C56 family. HchA subfamily. In terms of assembly, homodimer.

The protein localises to the cytoplasm. The enzyme catalyses N(omega)-(1-hydroxy-2-oxopropyl)-L-arginyl-[protein] + H2O = lactate + L-arginyl-[protein] + H(+). The catalysed reaction is N(6)-(1-hydroxy-2-oxopropyl)-L-lysyl-[protein] + H2O = lactate + L-lysyl-[protein] + H(+). It catalyses the reaction S-(1-hydroxy-2-oxopropyl)-L-cysteinyl-[protein] + H2O = lactate + L-cysteinyl-[protein] + H(+). It carries out the reaction N(omega)-(1-hydroxy-2-oxoethyl)-L-arginyl-[protein] + H2O = L-arginyl-[protein] + glycolate + H(+). The enzyme catalyses N(6)-(1-hydroxy-2-oxoethyl)-L-lysyl-[protein] + H2O = glycolate + L-lysyl-[protein] + H(+). The catalysed reaction is S-(1-hydroxy-2-oxoethyl)-L-cysteinyl-[protein] + H2O = glycolate + L-cysteinyl-[protein] + H(+). It catalyses the reaction N(2)-(1-hydroxy-2-oxopropyl)-dGTP + H2O = lactate + dGTP + H(+). It carries out the reaction N(2)-(1-hydroxy-2-oxopropyl)-GTP + H2O = lactate + GTP + H(+). The enzyme catalyses N(2)-(1-hydroxy-2-oxopropyl)-GDP + H2O = lactate + GDP + H(+). The catalysed reaction is N(2)-(1-hydroxy-2-oxopropyl)-GMP + H2O = lactate + GMP + H(+). It catalyses the reaction N(2)-(1-hydroxy-2-oxoethyl)-dGTP + H2O = dGTP + glycolate + H(+). It carries out the reaction N(2)-(1-hydroxy-2-oxoethyl)-GTP + H2O = glycolate + GTP + H(+). The enzyme catalyses N(2)-(1-hydroxy-2-oxoethyl)-GDP + H2O = glycolate + GDP + H(+). The catalysed reaction is N(2)-(1-hydroxy-2-oxoethyl)-GMP + H2O = glycolate + GMP + H(+). It catalyses the reaction an N(2)-(1-hydroxy-2-oxopropyl)-guanosine in RNA + H2O = a guanosine in RNA + lactate + H(+). It carries out the reaction an N(2)-(1-hydroxy-2-oxopropyl)-2'-deoxyguanosine in DNA + H2O = a 2'-deoxyguanosine in DNA + lactate + H(+). The enzyme catalyses an N(2)-(1-hydroxy-2-oxoethyl)-guanosine in RNA + H2O = a guanosine in RNA + glycolate + H(+). The catalysed reaction is an N(2)-(1-hydroxy-2-oxoethyl)-2'-deoxyguanosine in DNA + H2O = a 2'-deoxyguanosine in DNA + glycolate + H(+). Its function is as follows. Protein and nucleotide deglycase that catalyzes the deglycation of the Maillard adducts formed between amino groups of proteins or nucleotides and reactive carbonyl groups of glyoxals. Thus, functions as a protein deglycase that repairs methylglyoxal- and glyoxal-glycated proteins, and releases repaired proteins and lactate or glycolate, respectively. Deglycates cysteine, arginine and lysine residues in proteins, and thus reactivates these proteins by reversing glycation by glyoxals. Acts on early glycation intermediates (hemithioacetals and aminocarbinols), preventing the formation of Schiff bases and advanced glycation endproducts (AGE). Also functions as a nucleotide deglycase able to repair glycated guanine in the free nucleotide pool (GTP, GDP, GMP, dGTP) and in DNA and RNA. Is thus involved in a major nucleotide repair system named guanine glycation repair (GG repair), dedicated to reversing methylglyoxal and glyoxal damage via nucleotide sanitization and direct nucleic acid repair. Plays an important role in protecting cells from carbonyl stress. This is Protein/nucleic acid deglycase HchA from Shigella sonnei (strain Ss046).